We begin with the raw amino-acid sequence, 86 residues long: uncharacterized protein (86 aa).

The signal sequence occupies residues 1–31; that stretch reads MKQKLLLSGLAVSTVGITSYLLKDPSNRQKA. A disordered region spans residues 46–69; the sequence is PDMETFPVDKAGHPDPQDIEDNKM. Basic and acidic residues predominate over residues 55 to 69; it reads KAGHPDPQDIEDNKM.

This is an uncharacterized protein from Bacillus subtilis (strain 168).